The following is a 224-amino-acid chain: Protein PLANT CADMIUM RESISTANCE 6 (224 aa).

Residues 131–151 (GMLYGLICCLFAIPCVYTCTF) form a helical membrane-spanning segment.

The protein belongs to the cornifelin family.

It localises to the membrane. May be involved in heavy metals transport. The protein is Protein PLANT CADMIUM RESISTANCE 6 (PCR6) of Arabidopsis thaliana (Mouse-ear cress).